A 492-amino-acid chain; its full sequence is Trehalose-6-phosphate synthase (492 aa).

Arginine 25 is a D-glucose 6-phosphate binding site. Glycine 45–glycine 46 contributes to the UDP-alpha-D-glucose binding site. Residues tyrosine 101 and aspartate 155 each coordinate D-glucose 6-phosphate. 2 residues coordinate UDP-alpha-D-glucose: arginine 297 and lysine 302. Arginine 335 is a D-glucose 6-phosphate binding site. Leucine 400–glutamate 404 lines the UDP-alpha-D-glucose pocket.

It belongs to the glycosyltransferase 20 family. In terms of assembly, homotetramer.

It catalyses the reaction ADP-alpha-D-glucose + D-glucose 6-phosphate = alpha,alpha-trehalose 6-phosphate + ADP + H(+). The enzyme catalyses CDP-alpha-D-glucose + D-glucose 6-phosphate = alpha,alpha-trehalose 6-phosphate + CDP + H(+). The catalysed reaction is GDP-alpha-D-glucose + D-glucose 6-phosphate = alpha,alpha-trehalose 6-phosphate + GDP + H(+). It carries out the reaction TDP-alpha-D-glucose + D-glucose 6-phosphate = 5-methyl-UDP + alpha,alpha-trehalose 6-phosphate + H(+). It catalyses the reaction D-glucose 6-phosphate + UDP-alpha-D-glucose = alpha,alpha-trehalose 6-phosphate + UDP + H(+). It participates in glycan biosynthesis; trehalose biosynthesis. Probably involved in the osmoprotection via the biosynthesis of trehalose and in the production of glycogen and alpha-glucan via the TreS-Pep2 branch involved in the biosynthesis of maltose-1-phosphate (M1P). Catalyzes the transfer of glucose from UDP-glucose (UDP-Glc) to D-glucose 6-phosphate (Glc-6-P) to form trehalose-6-phosphate. Probably also able to use ADP-Glc, CDP-Glc, GDP-Glc and TDP-Glc as glucosyl donors. The chain is Trehalose-6-phosphate synthase from Mycobacterium avium (strain 104).